We begin with the raw amino-acid sequence, 100 residues long: Small ribosomal subunit protein uS14c (100 aa).

Belongs to the universal ribosomal protein uS14 family. As to quaternary structure, part of the 30S ribosomal subunit.

Its subcellular location is the plastid. The protein resides in the chloroplast. Its function is as follows. Binds 16S rRNA, required for the assembly of 30S particles. This is Small ribosomal subunit protein uS14c from Morus indica (Mulberry).